The primary structure comprises 211 residues: Protein-L-isoaspartate O-methyltransferase 2 (211 aa).

Ser-60 is an active-site residue.

The protein belongs to the methyltransferase superfamily. L-isoaspartyl/D-aspartyl protein methyltransferase family.

Its subcellular location is the cytoplasm. It carries out the reaction [protein]-L-isoaspartate + S-adenosyl-L-methionine = [protein]-L-isoaspartate alpha-methyl ester + S-adenosyl-L-homocysteine. Catalyzes the methyl esterification of L-isoaspartyl residues in peptides and proteins that result from spontaneous decomposition of normal L-aspartyl and L-asparaginyl residues. It plays a role in the repair and/or degradation of damaged proteins. This Nitrosospira multiformis (strain ATCC 25196 / NCIMB 11849 / C 71) protein is Protein-L-isoaspartate O-methyltransferase 2.